Here is a 390-residue protein sequence, read N- to C-terminus: Probable tRNA pseudouridine synthase D (390 aa).

The active-site Nucleophile is aspartate 93. In terms of domain architecture, TRUD spans 166-353 (HVLNYFGIQR…YGTRRKLITP (188 aa)).

The protein belongs to the pseudouridine synthase TruD family.

The enzyme catalyses uridine(13) in tRNA = pseudouridine(13) in tRNA. Could be responsible for synthesis of pseudouridine from uracil-13 in transfer RNAs. The chain is Probable tRNA pseudouridine synthase D from Methanococcus vannielii (strain ATCC 35089 / DSM 1224 / JCM 13029 / OCM 148 / SB).